Consider the following 232-residue polypeptide: MWAWALLPVFLAVFGTVGLWAVYAIAVSNNSVNITIEFPYISTCGAYTPQSCLFAQICNICCVLALWIVVIRFQQIRDLGRSSHLNTAGLVLGFISSIGISILGNFQQTIIQEVHLLGALMAFFLGLAYFWIQAFITYFSPPSRDNKWLVPVRFVLCSQCTCMVICMFVLHSTGFRSAAAICEWILVMCFFALFGVFAAEFRHIDFHKLTVQKEGLKVANNDNVVWTVQDVQ.

The Cytoplasmic portion of the chain corresponds to Met-1 to Leu-6. Residues Leu-7 to Val-27 traverse the membrane as a helical segment. At Ser-28–Gln-50 the chain is on the extracellular side. 2 N-linked (GlcNAc...) asparagine glycosylation sites follow: Asn-29 and Asn-33. A helical membrane pass occupies residues Ser-51 to Ile-71. At Arg-72 to Ser-83 the chain is on the cytoplasmic side. Residues His-84 to Gly-104 form a helical membrane-spanning segment. At Asn-105 to His-115 the chain is on the extracellular side. A helical membrane pass occupies residues Leu-116–Ile-136. The Cytoplasmic portion of the chain corresponds to Thr-137–Arg-153. Residues Phe-154 to Gly-174 traverse the membrane as a helical segment. The Extracellular segment spans residues Phe-175–Ser-177. Residues Ala-178–Ala-198 form a helical membrane-spanning segment. Over Ala-199–Gln-232 the chain is Cytoplasmic.

The protein belongs to the DRAM/TMEM150 family.

Its subcellular location is the cell membrane. The protein resides in the endosome membrane. It is found in the cytoplasmic vesicle. The protein localises to the autophagosome membrane. Its function is as follows. Modulator of macroautophagy that causes accumulation of autophagosomes under basal conditions and enhances autophagic flux. Represses cell death and promotes long-term clonogenic survival of cells grown in the absence of glucose in a macroautophagy-independent manner. May have some role in extracellular matrix engulfment or growth factor receptor recycling, both of which can modulate cell survival. In Danio rerio (Zebrafish), this protein is Modulator of macroautophagy TMEM150B.